We begin with the raw amino-acid sequence, 588 residues long: Adenine deaminase (588 aa).

The protein belongs to the metallo-dependent hydrolases superfamily. Adenine deaminase family. Homodimer. It depends on Mn(2+) as a cofactor.

It carries out the reaction adenine + H2O + H(+) = hypoxanthine + NH4(+). The protein is Adenine deaminase of Escherichia coli (strain K12 / DH10B).